Reading from the N-terminus, the 1362-residue chain is DNA-directed RNA polymerase subunit beta (1362 aa).

It belongs to the RNA polymerase beta chain family. In terms of assembly, the RNAP catalytic core consists of 2 alpha, 1 beta, 1 beta' and 1 omega subunit. When a sigma factor is associated with the core the holoenzyme is formed, which can initiate transcription.

The enzyme catalyses RNA(n) + a ribonucleoside 5'-triphosphate = RNA(n+1) + diphosphate. Its function is as follows. DNA-dependent RNA polymerase catalyzes the transcription of DNA into RNA using the four ribonucleoside triphosphates as substrates. This chain is DNA-directed RNA polymerase subunit beta, found in Acinetobacter baumannii (strain AB307-0294).